The following is a 219-amino-acid chain: Ribose-5-phosphate isomerase A (219 aa).

Substrate is bound by residues 28–31, 81–84, and 94–97; these read SGST, DGAD, and KGGG. Glutamate 103 functions as the Proton acceptor in the catalytic mechanism. Lysine 121 serves as a coordination point for substrate.

Belongs to the ribose 5-phosphate isomerase family. Homodimer.

The enzyme catalyses aldehydo-D-ribose 5-phosphate = D-ribulose 5-phosphate. Its pathway is carbohydrate degradation; pentose phosphate pathway; D-ribose 5-phosphate from D-ribulose 5-phosphate (non-oxidative stage): step 1/1. Its function is as follows. Catalyzes the reversible conversion of ribose-5-phosphate to ribulose 5-phosphate. In Mannheimia succiniciproducens (strain KCTC 0769BP / MBEL55E), this protein is Ribose-5-phosphate isomerase A.